We begin with the raw amino-acid sequence, 489 residues long: Betaine aldehyde dehydrogenase (489 aa).

The K(+) site is built by threonine 26 and aspartate 93. Position 150–152 (150–152 (GAW)) interacts with NAD(+). Lysine 162 (charge relay system) is an active-site residue. 176–179 (KPSE) is a binding site for NAD(+). Residue isoleucine 180 coordinates K(+). Residue 229-232 (GVET) coordinates NAD(+). Leucine 245 contributes to the K(+) binding site. Glutamate 251 functions as the Proton acceptor in the catalytic mechanism. The NAD(+) site is built by glycine 253, cysteine 285, and glutamate 386. Cysteine 285 acts as the Nucleophile in catalysis. A Cysteine sulfenic acid (-SOH) modification is found at cysteine 285. K(+) is bound by residues lysine 456 and glycine 459. Glutamate 463 serves as the catalytic Charge relay system.

The protein belongs to the aldehyde dehydrogenase family. As to quaternary structure, dimer of dimers. Requires K(+) as cofactor.

It carries out the reaction betaine aldehyde + NAD(+) + H2O = glycine betaine + NADH + 2 H(+). It functions in the pathway amine and polyamine biosynthesis; betaine biosynthesis via choline pathway; betaine from betaine aldehyde: step 1/1. Functionally, involved in the biosynthesis of the osmoprotectant glycine betaine. Catalyzes the irreversible oxidation of betaine aldehyde to the corresponding acid. In Paraburkholderia xenovorans (strain LB400), this protein is Betaine aldehyde dehydrogenase.